Consider the following 425-residue polypeptide: Adenylosuccinate synthetase (425 aa).

Residues 12-18 (GDEGKGK) and 40-42 (GHT) contribute to the GTP site. The active-site Proton acceptor is aspartate 13. Mg(2+) is bound by residues aspartate 13 and glycine 40. IMP contacts are provided by residues 13 to 16 (DEGK), 38 to 41 (NAGH), threonine 127, arginine 141, glutamine 222, threonine 237, and arginine 301. The active-site Proton donor is histidine 41. 297–303 (AVTGRPR) serves as a coordination point for substrate. GTP-binding positions include arginine 303, 329–331 (KID), and 411–413 (SVG).

The protein belongs to the adenylosuccinate synthetase family. In terms of assembly, homodimer. The cofactor is Mg(2+).

It localises to the cytoplasm. It carries out the reaction IMP + L-aspartate + GTP = N(6)-(1,2-dicarboxyethyl)-AMP + GDP + phosphate + 2 H(+). The protein operates within purine metabolism; AMP biosynthesis via de novo pathway; AMP from IMP: step 1/2. In terms of biological role, plays an important role in the de novo pathway of purine nucleotide biosynthesis. Catalyzes the first committed step in the biosynthesis of AMP from IMP. This Fusobacterium nucleatum subsp. nucleatum (strain ATCC 25586 / DSM 15643 / BCRC 10681 / CIP 101130 / JCM 8532 / KCTC 2640 / LMG 13131 / VPI 4355) protein is Adenylosuccinate synthetase.